The primary structure comprises 60 residues: Metallothionein B (60 aa).

Residues 1–28 (MDPCDCSKSGTCNCGGSCTCTNCSCTSC) form a beta region. A divalent metal cation contacts are provided by Cys-4, Cys-6, Cys-12, Cys-14, Cys-18, Cys-20, Cys-23, Cys-25, Cys-28, Cys-32, Cys-33, Cys-35, Cys-36, Cys-40, Cys-43, Cys-47, Cys-49, Cys-54, Cys-58, and Cys-59. The segment at 29–60 (KKSCCPCCPSGCTKCASGCVCKGKTCDTSCCQ) is alpha.

Belongs to the metallothionein superfamily. Type 1 family.

Metallothioneins have a high content of cysteine residues that bind various heavy metals. In Chionodraco hamatus (Antarctic teleost icefish), this protein is Metallothionein B (mtb).